We begin with the raw amino-acid sequence, 65 residues long: UPF0434 protein VFMJ11_A0475 (65 aa).

It belongs to the UPF0434 family.

This Aliivibrio fischeri (strain MJ11) (Vibrio fischeri) protein is UPF0434 protein VFMJ11_A0475.